The primary structure comprises 101 residues: Small ribosomal subunit protein uS14 (101 aa).

Belongs to the universal ribosomal protein uS14 family. As to quaternary structure, part of the 30S ribosomal subunit. Contacts proteins S3 and S10.

In terms of biological role, binds 16S rRNA, required for the assembly of 30S particles and may also be responsible for determining the conformation of the 16S rRNA at the A site. The chain is Small ribosomal subunit protein uS14 from Psychromonas ingrahamii (strain DSM 17664 / CCUG 51855 / 37).